Here is a 291-residue protein sequence, read N- to C-terminus: Pyridoxal 5'-phosphate synthase subunit PdxS (291 aa).

D23 provides a ligand contact to D-ribose 5-phosphate. K80 (schiff-base intermediate with D-ribose 5-phosphate) is an active-site residue. Residue G152 participates in D-ribose 5-phosphate binding. Position 164 (R164) interacts with D-glyceraldehyde 3-phosphate. D-ribose 5-phosphate-binding positions include G213 and 234 to 235 (GS).

Belongs to the PdxS/SNZ family. In the presence of PdxT, forms a dodecamer of heterodimers.

The enzyme catalyses aldehydo-D-ribose 5-phosphate + D-glyceraldehyde 3-phosphate + L-glutamine = pyridoxal 5'-phosphate + L-glutamate + phosphate + 3 H2O + H(+). The protein operates within cofactor biosynthesis; pyridoxal 5'-phosphate biosynthesis. Functionally, catalyzes the formation of pyridoxal 5'-phosphate from ribose 5-phosphate (RBP), glyceraldehyde 3-phosphate (G3P) and ammonia. The ammonia is provided by the PdxT subunit. Can also use ribulose 5-phosphate and dihydroxyacetone phosphate as substrates, resulting from enzyme-catalyzed isomerization of RBP and G3P, respectively. The sequence is that of Pyridoxal 5'-phosphate synthase subunit PdxS from Bifidobacterium longum (strain DJO10A).